The following is a 134-amino-acid chain: ATP synthase epsilon chain (134 aa).

It belongs to the ATPase epsilon chain family. F-type ATPases have 2 components, CF(1) - the catalytic core - and CF(0) - the membrane proton channel. CF(1) has five subunits: alpha(3), beta(3), gamma(1), delta(1), epsilon(1). CF(0) has three main subunits: a, b and c.

It is found in the cellular thylakoid membrane. Produces ATP from ADP in the presence of a proton gradient across the membrane. The chain is ATP synthase epsilon chain from Prochlorococcus marinus (strain MIT 9312).